Reading from the N-terminus, the 346-residue chain is Putative toluene-4-sulfonate monooxygenase system iron-sulfur subunit TsaM2 (346 aa).

Positions 7-108 constitute a Rieske domain; sequence WYVAGMATDC…LVERHGLLWI (102 aa). The [2Fe-2S] cluster site is built by Cys-47, His-49, Cys-66, and His-69.

In terms of assembly, homotetramer. Part of the p-toluenesulfonate methyl-monooxygenase complex TsaBM, comprising the reductase TsaB and the oxygenase TsaM. [2Fe-2S] cluster serves as cofactor.

The catalysed reaction is toluene-4-sulfonate + NADH + O2 + H(+) = 4-(hydroxymethyl)benzenesulfonate + NAD(+) + H2O. Its function is as follows. Involved in the toluene-4-sulfonate degradation pathway. Does not discriminate between the sulfonate and the carboxyl substituents and can also be involved in the p-toluenecarboxylate degradation pathway. This chain is Putative toluene-4-sulfonate monooxygenase system iron-sulfur subunit TsaM2 (tsaM2), found in Comamonas testosteroni (Pseudomonas testosteroni).